The primary structure comprises 371 residues: Putative glutamate--cysteine ligase 2 (371 aa).

The protein belongs to the glutamate--cysteine ligase type 2 family. YbdK subfamily.

It catalyses the reaction L-cysteine + L-glutamate + ATP = gamma-L-glutamyl-L-cysteine + ADP + phosphate + H(+). Its function is as follows. ATP-dependent carboxylate-amine ligase which exhibits weak glutamate--cysteine ligase activity. This chain is Putative glutamate--cysteine ligase 2, found in Burkholderia multivorans (strain ATCC 17616 / 249).